A 171-amino-acid polypeptide reads, in one-letter code: GTP-dependent dephospho-CoA kinase (171 aa).

4 residues coordinate GTP: Asp49, Val51, Asp68, and Glu122.

It belongs to the GTP-dependent DPCK family.

It carries out the reaction 3'-dephospho-CoA + GTP = GDP + CoA + H(+). It participates in cofactor biosynthesis; coenzyme A biosynthesis. In terms of biological role, catalyzes the GTP-dependent phosphorylation of the 3'-hydroxyl group of dephosphocoenzyme A to form coenzyme A (CoA). The chain is GTP-dependent dephospho-CoA kinase from Hyperthermus butylicus (strain DSM 5456 / JCM 9403 / PLM1-5).